The primary structure comprises 248 residues: 2,3-bisphosphoglycerate-dependent phosphoglycerate mutase (248 aa).

Substrate-binding positions include 8 to 15 (RHGESTWN), 21 to 22 (TG), arginine 60, 87 to 90 (ERHY), lysine 98, 114 to 115 (RR), and 183 to 184 (GN). The active-site Tele-phosphohistidine intermediate is histidine 9. Glutamate 87 (proton donor/acceptor) is an active-site residue.

The protein belongs to the phosphoglycerate mutase family. BPG-dependent PGAM subfamily. As to quaternary structure, homodimer.

The enzyme catalyses (2R)-2-phosphoglycerate = (2R)-3-phosphoglycerate. It functions in the pathway carbohydrate degradation; glycolysis; pyruvate from D-glyceraldehyde 3-phosphate: step 3/5. Functionally, catalyzes the interconversion of 2-phosphoglycerate and 3-phosphoglycerate. In Cupriavidus pinatubonensis (strain JMP 134 / LMG 1197) (Cupriavidus necator (strain JMP 134)), this protein is 2,3-bisphosphoglycerate-dependent phosphoglycerate mutase.